The sequence spans 90 residues: Small ribosomal subunit protein uS15 (90 aa).

It belongs to the universal ribosomal protein uS15 family. As to quaternary structure, part of the 30S ribosomal subunit. Forms a bridge to the 50S subunit in the 70S ribosome, contacting the 23S rRNA.

Its function is as follows. One of the primary rRNA binding proteins, it binds directly to 16S rRNA where it helps nucleate assembly of the platform of the 30S subunit by binding and bridging several RNA helices of the 16S rRNA. In terms of biological role, forms an intersubunit bridge (bridge B4) with the 23S rRNA of the 50S subunit in the ribosome. In Campylobacter concisus (strain 13826), this protein is Small ribosomal subunit protein uS15.